The sequence spans 364 residues: Aminomethyltransferase (364 aa).

It belongs to the GcvT family. In terms of assembly, the glycine cleavage system is composed of four proteins: P, T, L and H.

The catalysed reaction is N(6)-[(R)-S(8)-aminomethyldihydrolipoyl]-L-lysyl-[protein] + (6S)-5,6,7,8-tetrahydrofolate = N(6)-[(R)-dihydrolipoyl]-L-lysyl-[protein] + (6R)-5,10-methylene-5,6,7,8-tetrahydrofolate + NH4(+). In terms of biological role, the glycine cleavage system catalyzes the degradation of glycine. The sequence is that of Aminomethyltransferase from Escherichia coli (strain SMS-3-5 / SECEC).